We begin with the raw amino-acid sequence, 1252 residues long: DNA-directed RNA polymerase subunit beta (1252 aa).

The protein belongs to the RNA polymerase beta chain family. The RNAP catalytic core consists of 2 alpha, 1 beta, 1 beta' and 1 omega subunit. When a sigma factor is associated with the core the holoenzyme is formed, which can initiate transcription.

It carries out the reaction RNA(n) + a ribonucleoside 5'-triphosphate = RNA(n+1) + diphosphate. Functionally, DNA-dependent RNA polymerase catalyzes the transcription of DNA into RNA using the four ribonucleoside triphosphates as substrates. The chain is DNA-directed RNA polymerase subunit beta from Chlamydia muridarum (strain MoPn / Nigg).